Here is a 484-residue protein sequence, read N- to C-terminus: Glycogen synthase (484 aa).

Residue Lys20 participates in ADP-alpha-D-glucose binding.

It belongs to the glycosyltransferase 1 family. Bacterial/plant glycogen synthase subfamily.

It carries out the reaction [(1-&gt;4)-alpha-D-glucosyl](n) + ADP-alpha-D-glucose = [(1-&gt;4)-alpha-D-glucosyl](n+1) + ADP + H(+). Its pathway is glycan biosynthesis; glycogen biosynthesis. Functionally, synthesizes alpha-1,4-glucan chains using ADP-glucose. In Vibrio atlanticus (strain LGP32) (Vibrio splendidus (strain Mel32)), this protein is Glycogen synthase.